The chain runs to 267 residues: Octanoyltransferase (267 aa).

The interval 1–30 is disordered; that stretch reads MPTGKLRQKPPYAAIMTNSPVTPSTETQQP. Positions 16-28 are enriched in polar residues; sequence MTNSPVTPSTETQ. One can recognise a BPL/LPL catalytic domain in the interval 77-265; it reads GTASELVWLV…AFESVFGPRQ (189 aa). Residues 116–123, 196–198, and 209–211 each bind substrate; these read RGGEYTYH, AIG, and GIA. The active-site Acyl-thioester intermediate is C227.

This sequence belongs to the LipB family.

Its subcellular location is the cytoplasm. It carries out the reaction octanoyl-[ACP] + L-lysyl-[protein] = N(6)-octanoyl-L-lysyl-[protein] + holo-[ACP] + H(+). It functions in the pathway protein modification; protein lipoylation via endogenous pathway; protein N(6)-(lipoyl)lysine from octanoyl-[acyl-carrier-protein]: step 1/2. In terms of biological role, catalyzes the transfer of endogenously produced octanoic acid from octanoyl-acyl-carrier-protein onto the lipoyl domains of lipoate-dependent enzymes. Lipoyl-ACP can also act as a substrate although octanoyl-ACP is likely to be the physiological substrate. The chain is Octanoyltransferase from Brucella abortus biovar 1 (strain 9-941).